Consider the following 1450-residue polypeptide: Protein TIC 214 (1450 aa).

Helical transmembrane passes span 29–49, 61–81, 86–106, 132–152, 166–186, and 213–233; these read FGLYYGFLTTLPISFSHIVVI, VMAFCGLITGQLCMIGTIYYT, LFIKPHLILLLSIIYSFFYWQ, FFDSFVFQILNPILLPTPIFF, LNFFLSFFIGSLIGNFLFFNA, and IIPIVFCICLIPIAKYSHIPF.

Belongs to the TIC214 family. In terms of assembly, part of the Tic complex.

It localises to the plastid. The protein localises to the chloroplast inner membrane. Its function is as follows. Involved in protein precursor import into chloroplasts. May be part of an intermediate translocation complex acting as a protein-conducting channel at the inner envelope. The polypeptide is Protein TIC 214 (Chaetosphaeridium globosum (Charophycean green alga)).